The following is a 456-amino-acid chain: Molybdate transporter 1 (456 aa).

Helical transmembrane passes span 67–87 (LIFT…PMPV), 110–130 (IMAA…SGLM), 133–153 (VFNI…GLAF), 177–197 (PWLG…IVLV), 225–245 (VIAN…LAFI), 309–329 (AASV…FGAM), 354–374 (LLGV…VGIL), 377–397 (FPVG…AMAA), and 417–437 (LGSN…VLWM).

This sequence belongs to the SLC26A/SulP transporter (TC 2.A.53) family. Strongly expressed in roots. Detected in the vascular tissues of hypocotyls, in petioles and vascular tissues of cotyledons and leaves, in mesophyll cells, stamen, sepals and siliques.

Its subcellular location is the cell membrane. The protein resides in the endomembrane system. The protein localises to the mitochondrion membrane. Its activity is regulated as follows. Not inhibited by sulfate. High affinity molybdate transporter. Unable to transport sulfate. The sequence is that of Molybdate transporter 1 (MOT1) from Arabidopsis thaliana (Mouse-ear cress).